The chain runs to 323 residues: NADH-cytochrome b5 reductase 2 (323 aa).

The helical transmembrane segment at 32 to 48 (LAPIYLGVGLIGLGVGL) threads the bilayer. An FAD-binding FR-type domain is found at 72-177 (QGWVDLKLAQ…KGPIPKYPWE (106 aa)). 180-215 (KHKHICLIAGGTGITPMYQLARKIFKDPEDQTKVTL) provides a ligand contact to FAD.

The protein belongs to the flavoprotein pyridine nucleotide cytochrome reductase family. Requires FAD as cofactor.

The protein localises to the mitochondrion outer membrane. The enzyme catalyses 2 Fe(III)-[cytochrome b5] + NADH = 2 Fe(II)-[cytochrome b5] + NAD(+) + H(+). Its function is as follows. May mediate the reduction of outer membrane cytochrome b5. The chain is NADH-cytochrome b5 reductase 2 (mcr1) from Aspergillus fumigatus (strain ATCC MYA-4609 / CBS 101355 / FGSC A1100 / Af293) (Neosartorya fumigata).